A 120-amino-acid polypeptide reads, in one-letter code: U3-hexatoxin-Hi1a (120 aa).

The N-terminal stretch at 1–19 (MKLLYFFVVITVLVAVAAA) is a signal peptide. A propeptide spanning residues 20-51 (LPAKTEEQIAAEENQLVEDLVQYAGTRLTRKR) is cleaved from the precursor.

The protein belongs to the neurotoxin 25 family. F7 subfamily. Post-translationally, contains 4 disulfide bonds. Expressed by the venom gland.

The protein localises to the secreted. Functionally, weak insecticidal toxin with probable ion channel impairing activity. In vivo, induces paralysis when injected into sheep blowflies (L.cuprina). Shows weak toxicity, since it is only toxic at high doses, and flies recover within 24 hours. The polypeptide is U3-hexatoxin-Hi1a (Hadronyche infensa (Fraser island funnel-web spider)).